Reading from the N-terminus, the 158-residue chain is Photosystem I assembly protein Ycf3 (158 aa).

3 TPR repeats span residues 35–68, 72–105, and 113–146; these read AFSYYREGMAAQAEGEYAQALESYYHALEFEEDV, SYIIYNIGLIYASNGEDEQALEYYHQALELNPRL, and AVIYHKQGMTYQDEQLLQKAAAYWRKAIQLAPGQ.

This sequence belongs to the Ycf3 family.

The protein localises to the plastid. Its subcellular location is the chloroplast thylakoid membrane. Essential for the assembly of the photosystem I (PSI) complex. May act as a chaperone-like factor to guide the assembly of the PSI subunits. The chain is Photosystem I assembly protein Ycf3 from Cyanidioschyzon merolae (strain NIES-3377 / 10D) (Unicellular red alga).